The following is a 481-amino-acid chain: Protein FAM83E (481 aa).

Positions 1–296 (MAASQLAALE…LYAASRPLSA (296 aa)) are DUF1669. Residues 351 to 481 (KQETPTTTGP…ASGSGSGRRR (131 aa)) form a disordered region. Low complexity predominate over residues 371-385 (RTRTTSGPPTRPSRS). 2 stretches are compositionally biased toward polar residues: residues 391-400 (RLSQLSGSSD) and 465-474 (NATTSDWASG).

The protein belongs to the FAM83 family. In terms of assembly, directly interacts (via DUF1669) with CSNK1A1, CSNK1A1L, CSNK1D and CSNK1E. May interact with RAF1.

The protein resides in the cytoplasm. It is found in the perinuclear region. In terms of biological role, may play a role in MAPK signaling. The protein is Protein FAM83E of Mus musculus (Mouse).